Here is a 441-residue protein sequence, read N- to C-terminus: Enolase (441 aa).

Residue Gln-163 coordinates (2R)-2-phosphoglycerate. The active-site Proton donor is Glu-205. Asp-242, Glu-288, and Asp-315 together coordinate Mg(2+). (2R)-2-phosphoglycerate is bound by residues Lys-340, Arg-369, Ser-370, and Lys-391. Catalysis depends on Lys-340, which acts as the Proton acceptor.

It belongs to the enolase family. It depends on Mg(2+) as a cofactor.

Its subcellular location is the cytoplasm. The protein localises to the secreted. It is found in the cell surface. The enzyme catalyses (2R)-2-phosphoglycerate = phosphoenolpyruvate + H2O. Its pathway is carbohydrate degradation; glycolysis; pyruvate from D-glyceraldehyde 3-phosphate: step 4/5. Functionally, catalyzes the reversible conversion of 2-phosphoglycerate (2-PG) into phosphoenolpyruvate (PEP). It is essential for the degradation of carbohydrates via glycolysis. This Ligilactobacillus salivarius (strain UCC118) (Lactobacillus salivarius) protein is Enolase.